Here is a 126-residue protein sequence, read N- to C-terminus: Translation initiation factor 5A (126 aa).

Hypusine is present on K36.

Belongs to the eIF-5A family.

The protein localises to the cytoplasm. Functions by promoting the formation of the first peptide bond. The protein is Translation initiation factor 5A of Haloarcula marismortui (strain ATCC 43049 / DSM 3752 / JCM 8966 / VKM B-1809) (Halobacterium marismortui).